Consider the following 436-residue polypeptide: 3-ketoacyl-CoA thiolase (436 aa).

Cys-99 serves as the catalytic Acyl-thioester intermediate. Catalysis depends on proton acceptor residues His-392 and Cys-422.

It belongs to the thiolase-like superfamily. Thiolase family. Heterotetramer of two alpha chains (FadJ) and two beta chains (FadI).

The protein resides in the cytoplasm. The enzyme catalyses an acyl-CoA + acetyl-CoA = a 3-oxoacyl-CoA + CoA. It participates in lipid metabolism; fatty acid beta-oxidation. Catalyzes the final step of fatty acid oxidation in which acetyl-CoA is released and the CoA ester of a fatty acid two carbons shorter is formed. In Salmonella typhimurium (strain LT2 / SGSC1412 / ATCC 700720), this protein is 3-ketoacyl-CoA thiolase.